Reading from the N-terminus, the 550-residue chain is MAAKEVLFGNDARVKMLAGVNVLANAVKVTLGPKGRNVVLDKSFGAPLITKDGVSVAKEIELEDKFENMGAQMVKEVASKANDAAGDGTTTATVLAQAIVTEGLKAVAAGMNPMDLKRGIDKAVVAAVAELKNLSQECADTNAIAQVGTISANSDETIGEIIATAMEKVGKEGVITVEEGQALENELDVVEGMQFDRGYLSPYFINKPETGSVELESPFILLVDKKVSNIRELLPILEGLAKTGKPLLIVAEDVEGEALATLVVNNMRGIVKVAAVKAPGFGDRRKAMLQDIAILTGGTVIAEEIGLELEKATLEDLGTAKRVIITKDDTTIIDGTGEQDQIQARVAQIKVQAEESTSDYDKEKLQERMAKLAGGVAVIKVGAATEVEMKEKKARVEDALHATRAAVEEGVVAGGGVALVRVASKIADVEVINEDQKHGVVIALRAMEAPLRQIATNAGEESSVVANNVKNGSGNYGYNAGNDTYGDMLEMGILDPTKVTRSALQFAASIAGLMITTEAMVGEVPQEAAGAPDMGGMGGMGGMGGMGGMM.

Residues 30–33, K51, 87–91, G415, and D495 each bind ATP; these read TLGP and DGTTT.

This sequence belongs to the chaperonin (HSP60) family. Forms a cylinder of 14 subunits composed of two heptameric rings stacked back-to-back. Interacts with the co-chaperonin GroES.

The protein resides in the cytoplasm. The catalysed reaction is ATP + H2O + a folded polypeptide = ADP + phosphate + an unfolded polypeptide.. Together with its co-chaperonin GroES, plays an essential role in assisting protein folding. The GroEL-GroES system forms a nano-cage that allows encapsulation of the non-native substrate proteins and provides a physical environment optimized to promote and accelerate protein folding. In Shewanella woodyi (strain ATCC 51908 / MS32), this protein is Chaperonin GroEL.